A 670-amino-acid chain; its full sequence is MRTNRILNIICPPILFLLVGFLFGCVREDIESDMNETSSLFLQVQPYNQRSEEGGVAAYDENTIERLTLVFYKNGTKVWQAEPVETSPSSNSYYVPVPESMYGQFNGNNSFKIYLVANVNFSGSFEPNASETSFLKTLVPNSILLQNDGKPEDKFAMIGSVEKQINMATSEGKQLGSIELKRVAAKLRLKKPVLNISDYELVGDPKAKFRNCMPKGFLSVEEKPEGVGYEAIDYRPMTEANSSVHFYSYYNEWALNNEGRPEFVMMLKLKKTGTDDNTAKPYYYRIPVDGSDKKIRSNHLYDMAVTIEVLGSLNEEDPVTINGSLSVIEWTSHSDDQTLPDVQYLEVIPQETVMNMTTEIELDYFSSHSLLPPADVKATCTYVNSNGQQITDTYTGANVPTVTIDANTKKIKVRSILPINNIPKDISFTIKNSIGFEKKIKIRQNPSQFIINTFGTKSSWQPEGNLAPNLNNKAIYQIVVLSPPADGNMIIGFPPTKEVGFYKKSGSSYTLKHTDRITEQDEQTANMVSPSFELASQLGATLVQDHWEYYTLNPLRLIYHSNQQNRYALMTCAFYWEERKKADGTIERLDDWRLPTRAEIQLVDKLQREQAGVVRDIMTGRYYWSGLPDKAIKILLPTASGNATEQRAHVRCVRDVKNDRFVKSAKRLKK.

An N-terminal signal peptide occupies residues 1-24 (MRTNRILNIICPPILFLLVGFLFG). Cys25 carries N-palmitoyl cysteine lipidation. Cys25 is lipidated: S-diacylglycerol cysteine. Residues 25–50 (CVREDIESDMNETSSLFLQVQPYNQR) constitute a propeptide that is removed on maturation.

Belongs to the FimD family. As to quaternary structure, fimbriae are composed of a major, structural subunit and the minor components FimC, FimD and FimE. Identified in a complex composed of FimC, FimD and FimE (in vitro). The complex interacts with host extracellular matrix proteins, including fibronectin and type I collagen. Interacts with host CXCR4.

It is found in the fimbrium. The protein resides in the cell outer membrane. Its function is as follows. Probably a component of the fimbrium tip. These long, filamentous pili are attached to the cell surface; they mediate biofilm formation, adhesion onto host cells and onto other bacteria that are part of the oral microbiome. They play an important role in invasion of periodontal tissues and are major virulence factors. FimC, FimD and FimE contribute to interaction with host CXCR4 and thereby down-regulate the TLR2-mediated host immune response. The sequence is that of Major fimbrium tip subunit FimD from Porphyromonas gingivalis (strain ATCC 33277 / DSM 20709 / CIP 103683 / JCM 12257 / NCTC 11834 / 2561).